We begin with the raw amino-acid sequence, 231 residues long: Enolase-phosphatase E1 (231 aa).

Belongs to the HAD-like hydrolase superfamily. MasA/MtnC family. Monomer. It depends on Mg(2+) as a cofactor.

It catalyses the reaction 5-methylsulfanyl-2,3-dioxopentyl phosphate + H2O = 1,2-dihydroxy-5-(methylsulfanyl)pent-1-en-3-one + phosphate. Its pathway is amino-acid biosynthesis; L-methionine biosynthesis via salvage pathway; L-methionine from S-methyl-5-thio-alpha-D-ribose 1-phosphate: step 3/6. The protein operates within amino-acid biosynthesis; L-methionine biosynthesis via salvage pathway; L-methionine from S-methyl-5-thio-alpha-D-ribose 1-phosphate: step 4/6. Bifunctional enzyme that catalyzes the enolization of 2,3-diketo-5-methylthiopentyl-1-phosphate (DK-MTP-1-P) into the intermediate 2-hydroxy-3-keto-5-methylthiopentenyl-1-phosphate (HK-MTPenyl-1-P), which is then dephosphorylated to form the acireductone 1,2-dihydroxy-3-keto-5-methylthiopentene (DHK-MTPene). In Granulibacter bethesdensis (strain ATCC BAA-1260 / CGDNIH1), this protein is Enolase-phosphatase E1.